Here is a 346-residue protein sequence, read N- to C-terminus: Holliday junction branch migration complex subunit RuvB (346 aa).

Residues 2 to 183 (TDDRIIGAGA…FGIVQRLEFY (182 aa)) form a large ATPase domain (RuvB-L) region. ATP-binding positions include isoleucine 22, arginine 23, glycine 64, lysine 67, threonine 68, threonine 69, 130–132 (EDF), arginine 173, tyrosine 183, and arginine 220. Position 68 (threonine 68) interacts with Mg(2+). The segment at 184-254 (SVEELTRIVR…VAQAAMKMLK (71 aa)) is small ATPAse domain (RuvB-S). Residues 257 to 346 (PEGFDELDRR…DLFAEVPDVG (90 aa)) are head domain (RuvB-H). 3 residues coordinate DNA: arginine 293, arginine 312, and arginine 317.

The protein belongs to the RuvB family. As to quaternary structure, homohexamer. Forms an RuvA(8)-RuvB(12)-Holliday junction (HJ) complex. HJ DNA is sandwiched between 2 RuvA tetramers; dsDNA enters through RuvA and exits via RuvB. An RuvB hexamer assembles on each DNA strand where it exits the tetramer. Each RuvB hexamer is contacted by two RuvA subunits (via domain III) on 2 adjacent RuvB subunits; this complex drives branch migration. In the full resolvosome a probable DNA-RuvA(4)-RuvB(12)-RuvC(2) complex forms which resolves the HJ.

Its subcellular location is the cytoplasm. The enzyme catalyses ATP + H2O = ADP + phosphate + H(+). In terms of biological role, the RuvA-RuvB-RuvC complex processes Holliday junction (HJ) DNA during genetic recombination and DNA repair, while the RuvA-RuvB complex plays an important role in the rescue of blocked DNA replication forks via replication fork reversal (RFR). RuvA specifically binds to HJ cruciform DNA, conferring on it an open structure. The RuvB hexamer acts as an ATP-dependent pump, pulling dsDNA into and through the RuvAB complex. RuvB forms 2 homohexamers on either side of HJ DNA bound by 1 or 2 RuvA tetramers; 4 subunits per hexamer contact DNA at a time. Coordinated motions by a converter formed by DNA-disengaged RuvB subunits stimulates ATP hydrolysis and nucleotide exchange. Immobilization of the converter enables RuvB to convert the ATP-contained energy into a lever motion, pulling 2 nucleotides of DNA out of the RuvA tetramer per ATP hydrolyzed, thus driving DNA branch migration. The RuvB motors rotate together with the DNA substrate, which together with the progressing nucleotide cycle form the mechanistic basis for DNA recombination by continuous HJ branch migration. Branch migration allows RuvC to scan DNA until it finds its consensus sequence, where it cleaves and resolves cruciform DNA. The polypeptide is Holliday junction branch migration complex subunit RuvB (Stenotrophomonas maltophilia (strain R551-3)).